Consider the following 81-residue polypeptide: MSILSSLISISISSPSKNSTVSSNNNYYSAVSMEGITIASSHIKTISYTSPKSSNTRAYSPTGYGYSYSYSYGYSSCGYNF.

The protein belongs to the hssA/B family.

The chain is HssA/B-like protein 5 (hssl5) from Dictyostelium discoideum (Social amoeba).